The following is a 324-amino-acid chain: Antihemorrhagic factor cMSF (324 aa).

Residues Met-1–Ser-19 form the signal peptide. 2 Cystatin fetuin-A-type domains span residues Val-22–His-130 and Arg-141–Val-254. The Cell attachment site signature appears at Arg-23–Asp-25. 7 cysteine pairs are disulfide-bonded: Cys-28–Cys-315, Cys-85–Cys-96, Cys-110–Cys-129, Cys-143–Cys-146, Cys-205–Cys-217, Cys-230–Cys-253, and Cys-287–Cys-291. N-linked (GlcNAc...) asparagine glycosylation occurs at Asn-204. N-linked (GlcNAc...) asparagine glycosylation is present at Asn-282.

In terms of assembly, homodimer. As to expression, expressed by the liver.

Its subcellular location is the secreted. Its function is as follows. Suppress hemorrhage induced by metalloproteinases from the same venom (brevilysin-H3, -H4, -H6) and from habu venom (metalloproteinases HR1A and HR1B). The non-hemorrhagic brevilysin-L4 is not inhibited by cMSF. Does not inhibit serine and cysteine proteases such as trypsin, chymotrypsin, thermolysin, and papain. The inhibition may occur by formation of a non-covalent complex between this protein and the proteinases at their metalloproteinase domains. The sequence is that of Antihemorrhagic factor cMSF from Gloydius brevicauda (Korean slamosa snake).